The chain runs to 785 residues: E3 UFM1-protein ligase 1 homolog (785 aa).

The interval 404–482 is disordered; it reads NASFQDQDDD…AGGGGGNKKT (79 aa).

It belongs to the UFL1 family.

E3 UFM1-protein ligase that mediates ufmylation of target proteins. This Drosophila persimilis (Fruit fly) protein is E3 UFM1-protein ligase 1 homolog.